We begin with the raw amino-acid sequence, 105 residues long: UPF0060 membrane protein Ajs_1326 (105 aa).

The next 4 membrane-spanning stretches (helical) occupy residues 4 to 24, 30 to 50, 60 to 80, and 82 to 102; these read FALFIATALAEIVGCYLPYLW, SAWLLVPAAASLALFAWLLTL, AAYGGVYIGVALLWLWIVDGI, and PTAWDVAGVAVALTGMGLIMF.

Belongs to the UPF0060 family.

The protein localises to the cell inner membrane. The protein is UPF0060 membrane protein Ajs_1326 of Acidovorax sp. (strain JS42).